The chain runs to 220 residues: Glycerol-3-phosphate acyltransferase (220 aa).

6 consecutive transmembrane segments (helical) span residues 11–31, 70–90, 96–116, 127–147, 153–173, and 193–213; these read INVIFTLLGYLIGGIPFGYAL, LLVLILDLFKGMFAVFLSKLF, LQWMVAIASILGHCYSPFLNF, GSVVLLIPIESLIGLTVWFFV, ISSLASILGVGTATVLIFFVP, and MVLIFIFTLIKHAGNIFNLLA.

This sequence belongs to the PlsY family. In terms of assembly, probably interacts with PlsX.

It localises to the cell inner membrane. It carries out the reaction an acyl phosphate + sn-glycerol 3-phosphate = a 1-acyl-sn-glycero-3-phosphate + phosphate. It participates in lipid metabolism; phospholipid metabolism. In terms of biological role, catalyzes the transfer of an acyl group from acyl-phosphate (acyl-PO(4)) to glycerol-3-phosphate (G3P) to form lysophosphatidic acid (LPA). This enzyme utilizes acyl-phosphate as fatty acyl donor, but not acyl-CoA or acyl-ACP. The polypeptide is Glycerol-3-phosphate acyltransferase (Helicobacter pylori (strain HPAG1)).